The primary structure comprises 1381 residues: DNA-directed RNA polymerase subunit beta'' (1381 aa).

Zn(2+)-binding residues include cysteine 224, cysteine 296, cysteine 303, and cysteine 306.

This sequence belongs to the RNA polymerase beta' chain family. RpoC2 subfamily. As to quaternary structure, in plastids the minimal PEP RNA polymerase catalytic core is composed of four subunits: alpha, beta, beta', and beta''. When a (nuclear-encoded) sigma factor is associated with the core the holoenzyme is formed, which can initiate transcription. Zn(2+) serves as cofactor.

The protein localises to the plastid. Its subcellular location is the chloroplast. It catalyses the reaction RNA(n) + a ribonucleoside 5'-triphosphate = RNA(n+1) + diphosphate. Its function is as follows. DNA-dependent RNA polymerase catalyzes the transcription of DNA into RNA using the four ribonucleoside triphosphates as substrates. This Drimys granadensis protein is DNA-directed RNA polymerase subunit beta''.